Reading from the N-terminus, the 185-residue chain is Ribosome-recycling factor (185 aa).

The protein belongs to the RRF family.

The protein localises to the cytoplasm. Responsible for the release of ribosomes from messenger RNA at the termination of protein biosynthesis. May increase the efficiency of translation by recycling ribosomes from one round of translation to another. The sequence is that of Ribosome-recycling factor from Shewanella denitrificans (strain OS217 / ATCC BAA-1090 / DSM 15013).